Reading from the N-terminus, the 283-residue chain is Thymidylate synthase (283 aa).

Arginine 22 contributes to the dUMP binding site. Catalysis depends on cysteine 160, which acts as the Nucleophile. DUMP-binding positions include 180-183, asparagine 191, and 221-223; these read RSCD and HIY. Aspartate 183 serves as a coordination point for (6R)-5,10-methylene-5,6,7,8-tetrahydrofolate. Alanine 282 is a binding site for (6R)-5,10-methylene-5,6,7,8-tetrahydrofolate.

This sequence belongs to the thymidylate synthase family. Bacterial-type ThyA subfamily. Homodimer.

Its subcellular location is the cytoplasm. It catalyses the reaction dUMP + (6R)-5,10-methylene-5,6,7,8-tetrahydrofolate = 7,8-dihydrofolate + dTMP. It functions in the pathway pyrimidine metabolism; dTTP biosynthesis. Functionally, catalyzes the reductive methylation of 2'-deoxyuridine-5'-monophosphate (dUMP) to 2'-deoxythymidine-5'-monophosphate (dTMP) while utilizing 5,10-methylenetetrahydrofolate (mTHF) as the methyl donor and reductant in the reaction, yielding dihydrofolate (DHF) as a by-product. This enzymatic reaction provides an intracellular de novo source of dTMP, an essential precursor for DNA biosynthesis. This Colwellia psychrerythraea (strain 34H / ATCC BAA-681) (Vibrio psychroerythus) protein is Thymidylate synthase.